Consider the following 218-residue polypeptide: Large ribosomal subunit protein uL3 (218 aa).

The protein belongs to the universal ribosomal protein uL3 family. In terms of assembly, part of the 50S ribosomal subunit. Forms a cluster with proteins L14 and L19.

One of the primary rRNA binding proteins, it binds directly near the 3'-end of the 23S rRNA, where it nucleates assembly of the 50S subunit. The protein is Large ribosomal subunit protein uL3 of Corynebacterium efficiens (strain DSM 44549 / YS-314 / AJ 12310 / JCM 11189 / NBRC 100395).